The chain runs to 649 residues: Transmembrane and coiled-coil domains protein 1 (649 aa).

Met1 is subject to N-acetylmethionine. Disordered regions lie at residues 1-37, 58-83, 110-166, and 197-222; these read MEPS…LSKM, HQRR…EVDL, RVPP…PTSS, and LAQT…GIPD. The Cytoplasmic segment spans residues 1–587; the sequence is MEPSGSEQLY…ARNLLGKLIN (587 aa). Residues 20-34 show a composition bias toward basic and acidic residues; sequence QDAEARRQTESEQKL. A compositionally biased stretch (polar residues) spans 64-75; the sequence is SVSPHDVQQIQT. Residues 113-125 show a composition bias toward basic residues; sequence PKMKRGTSLHSRR. The span at 156-166 shows a compositional bias: low complexity; the sequence is SSSTTDAPTSS. Polar residues predominate over residues 197-214; sequence LAQTSSAVASSTDGSIHT. A coiled-coil region spans residues 224–310; it reads QRTKAAIAHL…KLREVEQNGI (87 aa). 2 positions are modified to phosphoserine: Ser378 and Ser410. Residues 411 to 433 form a disordered region; that stretch reads PKYGSEEDCSSATSGSVGANSTT. Residues 420-433 are compositionally biased toward polar residues; sequence SSATSGSVGANSTT. A coiled-coil region spans residues 457 to 566; it reads ALLHEVQEIR…KMELQQQQQQ (110 aa). 2 helical membrane passes run 588-608 and 621-641; these read ILLA…NCVV and LFLV…FSYV. At 642–649 the chain is on the cytoplasmic side; sequence DRLFSPPR.

The protein belongs to the TEX28 family. May form homodimers and heterodimers with TMCC2 or TMCC3 via the coiled-coil domains. Interacts with ribosomal proteins RPL4 and RPS6.

Its subcellular location is the endoplasmic reticulum membrane. In terms of biological role, endoplasmic reticulum membrane protein that promotes endoplasmic reticulum-associated endosome fission. Localizes to contact sites between the endoplasmic reticulum and endosomes and acts by promoting recruitment of the endoplasmic reticulum to endosome tubules for fission. Endosome membrane fission of early and late endosomes is essential to separate regions destined for lysosomal degradation from carriers to be recycled to the plasma membrane. This is Transmembrane and coiled-coil domains protein 1 (Tmcc1) from Mus musculus (Mouse).